Consider the following 328-residue polypeptide: Urokinase plasminogen activator surface receptor (328 aa).

Positions 1–24 (MGLLRRRLLLLVVVVTTCVPASQG) are cleaved as a signal peptide. UPAR/Ly6 domains lie at 25 to 118 (LRCI…GRYL), 118 to 213 (LECA…PPNG), and 214 to 299 (FQCY…RPTG). 3 disulfide bridges follow: Cys-27-Cys-48, Cys-30-Cys-36, and Cys-41-Cys-69. N-linked (GlcNAc...) asparagine glycosylation is present at Asn-76. 11 cysteine pairs are disulfide-bonded: Cys-95-Cys-100, Cys-120-Cys-147, Cys-123-Cys-130, Cys-140-Cys-169, Cys-175-Cys-192, Cys-193-Cys-198, Cys-216-Cys-244, Cys-219-Cys-227, Cys-237-Cys-263, Cys-269-Cys-288, and Cys-289-Cys-294. N-linked (GlcNAc...) asparagine glycans are attached at residues Asn-184, Asn-194, Asn-222, Asn-255, Asn-283, and Asn-290. Gly-299 carries the GPI-anchor amidated glycine lipid modification. The propeptide at 300 to 328 (GAPGPGPAHLILIASLLLTLRLWGIPLWT) is removed in mature form.

In terms of assembly, monomer. Interacts (via the UPAR/Ly6 domains) with SRPX2. Interacts with MRC2. Interacts with SORL1 (via N-terminal ectodomain); this interaction decreases PLAUR internalization. The ternary complex composed of PLAUR-PLAU-SERPINE1 also interacts with SORL1. Interacts with CD82; this interaction prevents PLAUR from binding to its high affinity ligand PLAU.

Its subcellular location is the cell membrane. The protein resides in the secreted. Functionally, acts as a receptor for urokinase plasminogen activator. Plays a role in localizing and promoting plasmin formation. Mediates the proteolysis-independent signal transduction activation effects of U-PA. This is Urokinase plasminogen activator surface receptor (Plaur) from Rattus norvegicus (Rat).